The primary structure comprises 662 residues: Envelope glycoprotein (662 aa).

A signal peptide spans 1-34 (MEGPTHPKPSKDKTFSWDLMILVGVLLRLDVGMA). The Extracellular segment spans residues 35–606 (NPSPHQIYNV…FNKSPWFTTL (572 aa)). N-linked (GlcNAc...) asparagine; by host glycans are attached at residues asparagine 43 and asparagine 58. 2 disulfides stabilise this stretch: cysteine 115–cysteine 132 and cysteine 124–cysteine 137. Residues 251–281 (VLPDQKPPSRQSQIESRVTPHHSQGNGGTPG) form a disordered region. Residues 258–274 (PSRQSQIESRVTPHHSQ) are compositionally biased toward polar residues. N-linked (GlcNAc...) asparagine; by host glycans are attached at residues asparagine 286, asparagine 322, and asparagine 327. Cystine bridges form between cysteine 332–cysteine 335, cysteine 332–cysteine 559, and cysteine 551–cysteine 558. The CXXC motif lies at 332–335 (CWLC). 3 N-linked (GlcNAc...) asparagine; by host glycosylation sites follow: asparagine 351, asparagine 354, and asparagine 430. Residues 468-488 (ISLTVALMLGGLTVGGIAAGV) form a fusion peptide region. Coiled-coil stretches lie at residues 496-545 (LETA…ILFL) and 555-591 (KEECCFYADHTGLVRDNMAKLRERLKQRQQLFDSQQG). An immunosuppression region spans residues 534-550 (LQNRRGLDILFLQEGGL). The CX6CC motif lies at 551 to 559 (CAALKEECC). A helical transmembrane segment spans residues 607–627 (ISSIMGPLLILLLILLFGPCI). Residue cysteine 626 is the site of S-palmitoyl cysteine; by host attachment. Residues 628–662 (LNRLVQFVKDRISVVQALILTQQYQQIKQYDPDQP) lie on the Cytoplasmic side of the membrane.

As to quaternary structure, the mature envelope protein (Env) consists of a trimer of SU-TM heterodimers attached by a labile interchain disulfide bond. Specific enzymatic cleavages in vivo yield mature proteins. Envelope glycoproteins are synthesized as an inactive precursor that is N-glycosylated and processed likely by host cell furin or by a furin-like protease in the Golgi to yield the mature SU and TM proteins. The cleavage site between SU and TM requires the minimal sequence [KR]-X-[KR]-R. The R-peptide is released from the C-terminus of the cytoplasmic tail of the TM protein upon particle formation as a result of proteolytic cleavage by the viral protease. Cleavage of this peptide is required for TM to become fusogenic. Post-translationally, the CXXC motif is highly conserved across a broad range of retroviral envelope proteins. It is thought to participate in the formation of a labile disulfide bond possibly with the CX6CC motif present in the transmembrane protein. Isomerization of the intersubunit disulfide bond to an SU intrachain disulfide bond is thought to occur upon receptor recognition in order to allow membrane fusion. In terms of processing, the transmembrane protein is palmitoylated. The R-peptide is palmitoylated.

Its subcellular location is the virion membrane. The protein resides in the host cell membrane. Its function is as follows. The surface protein (SU) attaches the virus to the host cell by binding to its receptor. This interaction triggers the refolding of the transmembrane protein (TM) and is thought to activate its fusogenic potential by unmasking its fusion peptide. Fusion occurs at the host cell plasma membrane. Functionally, the transmembrane protein (TM) acts as a class I viral fusion protein. Under the current model, the protein has at least 3 conformational states: pre-fusion native state, pre-hairpin intermediate state, and post-fusion hairpin state. During viral and target cell membrane fusion, the coiled coil regions (heptad repeats) assume a trimer-of-hairpins structure, positioning the fusion peptide in close proximity to the C-terminal region of the ectodomain. The formation of this structure appears to drive apposition and subsequent fusion of viral and target cell membranes. Membranes fusion leads to delivery of the nucleocapsid into the cytoplasm. The protein is Envelope glycoprotein (env) of Felis catus (Cat).